The sequence spans 206 residues: CBS domain-containing protein CBSX3, mitochondrial (206 aa).

A mitochondrion-targeting transit peptide spans 1–39 (MQGVIRSFVSGGNVVKGSVLQHLRVINPAIQPSVFCSRS). CBS domains lie at 61–127 (MKSK…GRSS) and 136–194 (MTEE…HREE).

The protein resides in the mitochondrion. The protein is CBS domain-containing protein CBSX3, mitochondrial (CBSX3) of Arabidopsis thaliana (Mouse-ear cress).